The following is a 204-amino-acid chain: Ribosomal RNA small subunit methyltransferase G (204 aa).

S-adenosyl-L-methionine contacts are provided by G73, F78, and R139.

Belongs to the methyltransferase superfamily. RNA methyltransferase RsmG family.

The protein resides in the cytoplasm. It carries out the reaction guanosine(527) in 16S rRNA + S-adenosyl-L-methionine = N(7)-methylguanosine(527) in 16S rRNA + S-adenosyl-L-homocysteine. Specifically methylates the N7 position of guanine in position 527 of 16S rRNA. In Coxiella burnetii (strain CbuG_Q212) (Coxiella burnetii (strain Q212)), this protein is Ribosomal RNA small subunit methyltransferase G.